A 351-amino-acid polypeptide reads, in one-letter code: uncharacterized protein (351 aa).

Mn(2+)-binding residues include Asp215, Asp226, His290, Glu319, and Glu333.

It belongs to the peptidase M24B family. Mn(2+) serves as cofactor.

This is an uncharacterized protein from Staphylococcus aureus (strain MW2).